A 499-amino-acid polypeptide reads, in one-letter code: Kynurenine 3-monooxygenase 3 (499 aa).

This sequence belongs to the aromatic-ring hydroxylase family. KMO subfamily. FAD is required as a cofactor.

The protein resides in the mitochondrion outer membrane. It catalyses the reaction L-kynurenine + NADPH + O2 + H(+) = 3-hydroxy-L-kynurenine + NADP(+) + H2O. The protein operates within cofactor biosynthesis; NAD(+) biosynthesis; quinolinate from L-kynurenine: step 1/3. Its function is as follows. Catalyzes the hydroxylation of L-kynurenine (L-Kyn) to form 3-hydroxy-L-kynurenine (L-3OHKyn). Required for synthesis of quinolinic acid. The protein is Kynurenine 3-monooxygenase 3 (bna4-3) of Aspergillus niger (strain ATCC MYA-4892 / CBS 513.88 / FGSC A1513).